The sequence spans 173 residues: Crossover junction endodeoxyribonuclease RuvC (173 aa).

Active-site residues include Asp-8, Glu-67, and Asp-139. Mg(2+) is bound by residues Asp-8, Glu-67, and Asp-139.

This sequence belongs to the RuvC family. In terms of assembly, homodimer which binds Holliday junction (HJ) DNA. The HJ becomes 2-fold symmetrical on binding to RuvC with unstacked arms; it has a different conformation from HJ DNA in complex with RuvA. In the full resolvosome a probable DNA-RuvA(4)-RuvB(12)-RuvC(2) complex forms which resolves the HJ. It depends on Mg(2+) as a cofactor.

The protein resides in the cytoplasm. It carries out the reaction Endonucleolytic cleavage at a junction such as a reciprocal single-stranded crossover between two homologous DNA duplexes (Holliday junction).. Its function is as follows. The RuvA-RuvB-RuvC complex processes Holliday junction (HJ) DNA during genetic recombination and DNA repair. Endonuclease that resolves HJ intermediates. Cleaves cruciform DNA by making single-stranded nicks across the HJ at symmetrical positions within the homologous arms, yielding a 5'-phosphate and a 3'-hydroxyl group; requires a central core of homology in the junction. The consensus cleavage sequence is 5'-(A/T)TT(C/G)-3'. Cleavage occurs on the 3'-side of the TT dinucleotide at the point of strand exchange. HJ branch migration catalyzed by RuvA-RuvB allows RuvC to scan DNA until it finds its consensus sequence, where it cleaves and resolves the cruciform DNA. The sequence is that of Crossover junction endodeoxyribonuclease RuvC from Klebsiella pneumoniae (strain 342).